The primary structure comprises 180 residues: Anaerobic nitrite reductase GLB0 (180 aa).

Residues 23–172 (TYSKENEQLV…LAEQVKAEMH (150 aa)) enclose the Globin domain. The short motif at 56-60 (EIAPG) is the Homodimerization element. Heme b-binding residues include serine 66, lysine 80, histidine 84, lysine 114, threonine 118, and histidine 119. The Homodimerization signature appears at 126-138 (DDQFEIVKEAILY).

The protein belongs to the plant globin family. In terms of assembly, homodimer. Heme b is required as a cofactor.

It is found in the cytoplasm. The protein localises to the nucleus. The catalysed reaction is Fe(III)-heme b-[protein] + nitric oxide + H2O = Fe(II)-heme b-[protein] + nitrite + 2 H(+). In terms of biological role, phytoglobin that reduces nitrite to nitric oxide (NO) under anoxic conditions (e.g. during flooding or in waterlogged soil). May not function as an oxygen storage or transport protein. Has an unusually high affinity for O(2) through an hexacoordinate heme iron because of a very low dissociation constant. This Physcomitrium patens (Spreading-leaved earth moss) protein is Anaerobic nitrite reductase GLB0.